The sequence spans 498 residues: MRFTLTRWCLTLFIFLNRPLPVLPDSADGAHTPTLEPEPFLYILGKQRMLEAQHRCYDRMQKLPPYQGEGLYCNRTWDGWSCWDDTPAGVLAEQYCPDYFPDFDAAEKVTKYCGEDGDWYRHPESNISWSNYTMCNAFTPDKLQNAYILYYLAIVGHSLSILTLLISLGIFMFLRYFNLLAPFNALLYPTRSISCQRVTLHKNMFLTYVLNSIIIIVHLVVIVPNGELVKRDPPICKVLHFFHQYMMSCNYFWMLCEGVYLHTLIVVSVFAEGQRLWWYHVLGWGFPLIPTTAHAITRAVLFNDNCWLSVDTNLLYIIHGPVMAALVVNFFFLLNILRVLVKKLKESQEAESHMYLKAVRATLILVPLLGVQFVVLPWRPSTPLLGKIYDYVVHSLIHFQGFFVAIIYCFCNHEVQGALKRQWNQYQAQRWAGRRSTRAANAAAATAAAAAALAETVEIPVYICHQEPREEPAGEEPVVEVEGVEVIAMEVLEQETSA.

An N-terminal signal peptide occupies residues 1-29 (MRFTLTRWCLTLFIFLNRPLPVLPDSADG). Residues 30–147 (AHTPTLEPEP…FTPDKLQNAY (118 aa)) lie on the Extracellular side of the membrane. Disulfide bonds link Cys56–Cys82, Cys73–Cys113, and Cys96–Cys135. Residues Asn74, Asn126, and Asn131 are each glycosylated (N-linked (GlcNAc...) asparagine). The helical transmembrane segment at 148 to 170 (ILYYLAIVGHSLSILTLLISLGI) threads the bilayer. Residues 171-198 (FMFLRYFNLLAPFNALLYPTRSISCQRV) are Cytoplasmic-facing. Residues 199–219 (TLHKNMFLTYVLNSIIIIVHL) traverse the membrane as a helical segment. At 220–236 (VVIVPNGELVKRDPPIC) the chain is on the extracellular side. Cys236 and Cys306 are oxidised to a cystine. The chain crosses the membrane as a helical span at residues 237-259 (KVLHFFHQYMMSCNYFWMLCEGV). The Cytoplasmic segment spans residues 260-276 (YLHTLIVVSVFAEGQRL). The chain crosses the membrane as a helical span at residues 277–297 (WWYHVLGWGFPLIPTTAHAIT). Residues 298–313 (RAVLFNDNCWLSVDTN) lie on the Extracellular side of the membrane. Residues 314–337 (LLYIIHGPVMAALVVNFFFLLNIL) form a helical membrane-spanning segment. Residues 338–357 (RVLVKKLKESQEAESHMYLK) lie on the Cytoplasmic side of the membrane. The helical transmembrane segment at 358 to 376 (AVRATLILVPLLGVQFVVL) threads the bilayer. Topologically, residues 377–384 (PWRPSTPL) are extracellular. A helical membrane pass occupies residues 385 to 411 (LGKIYDYVVHSLIHFQGFFVAIIYCFC). The Cytoplasmic segment spans residues 412–498 (NHEVQGALKR…MEVLEQETSA (87 aa)).

It belongs to the G-protein coupled receptor 2 family. As to quaternary structure, heterodimer of CALCR and RAMP1, RAMP2 or RAMP3; the receptor complexes function as AMYR1, AMYR2 and AMYR3 receptors, respectively, and respond to amylin/IAPP, calcitonin/CT and CGRP1 ligands. Interacts with GPRASP2.

Its subcellular location is the cell membrane. Its function is as follows. G protein-coupled receptor activated by ligand peptides amylin (IAPP), calcitonin (CT/CALCA) and calcitonin gene-related peptide type 1 (CGRP1/CALCA). CALCR interacts with receptor-activity-modifying proteins RAMP1, 2 and 3 to form receptor complexes AMYR1, 2 and 3, respectively. IAPP, CT and CGRP1 activate CALCR and AMYRs with distinct modes of receptor activation resulting in specific phenotypes. Ligand binding causes a conformation change that triggers signaling via guanine nucleotide-binding proteins (G proteins) and modulates the activity of downstream effectors. Activates cAMP-dependent pathway. The chain is Calcitonin receptor from Sus scrofa (Pig).